Reading from the N-terminus, the 249-residue chain is Aliphatic sulfonates import ATP-binding protein SsuB 2 (249 aa).

The ABC transporter domain occupies 15-231 (VHVRDLARRF…DHGDPRFAQF (217 aa)). Residue 47–54 (GRSGSGKS) coordinates ATP.

It belongs to the ABC transporter superfamily. Aliphatic sulfonates importer (TC 3.A.1.17.2) family. The complex is composed of two ATP-binding proteins (SsuB), two transmembrane proteins (SsuC) and a solute-binding protein (SsuA).

The protein localises to the cell inner membrane. It catalyses the reaction ATP + H2O + aliphatic sulfonate-[sulfonate-binding protein]Side 1 = ADP + phosphate + aliphatic sulfonateSide 2 + [sulfonate-binding protein]Side 1.. Its function is as follows. Part of the ABC transporter complex SsuABC involved in aliphatic sulfonates import. Responsible for energy coupling to the transport system. The chain is Aliphatic sulfonates import ATP-binding protein SsuB 2 from Rhizobium johnstonii (strain DSM 114642 / LMG 32736 / 3841) (Rhizobium leguminosarum bv. viciae).